We begin with the raw amino-acid sequence, 191 residues long: Protein Ves (191 aa).

Belongs to the Ves family.

This is Protein Ves from Escherichia coli (strain SE11).